The chain runs to 234 residues: Proteasome subunit alpha type-2 (234 aa).

The protein belongs to the peptidase T1A family. As to quaternary structure, the 26S proteasome consists of a 20S proteasome core and two 19S regulatory subunits. The 20S proteasome core is composed of 28 subunits that are arranged in four stacked rings, resulting in a barrel-shaped structure. The two end rings are each formed by seven alpha subunits, and the two central rings are each formed by seven beta subunits. The catalytic chamber with the active sites is on the inside of the barrel. Interacts with Rpn6.

Its subcellular location is the cytoplasm. It is found in the nucleus. Its function is as follows. The proteasome is a multicatalytic proteinase complex which is characterized by its ability to cleave peptides with Arg, Phe, Tyr, Leu, and Glu adjacent to the leaving group at neutral or slightly basic pH. The proteasome has an ATP-dependent proteolytic activity. This is Proteasome subunit alpha type-2 (Prosalpha2) from Drosophila melanogaster (Fruit fly).